We begin with the raw amino-acid sequence, 78 residues long: Small ribosomal subunit protein bS16c (78 aa).

This sequence belongs to the bacterial ribosomal protein bS16 family.

Its subcellular location is the plastid. The protein resides in the chloroplast. This chain is Small ribosomal subunit protein bS16c, found in Chara vulgaris (Common stonewort).